The chain runs to 198 residues: Na(+)-translocating NADH-quinone reductase subunit E (198 aa).

Helical transmembrane passes span 11–31 (SVFIENMALSFFLGMCTFLAV), 35–55 (VSTAFGLGVAVTVVLGISVPV), 77–97 (FLNFITFIGVIAALVQILEMI), 110–130 (GIFLPLITVNCAIFGGVSFMV), 140–160 (VVYGIGAGTGWMLAIVALAGI), and 176–196 (LGITFITVGLMALGFMSFSGV).

It belongs to the NqrDE/RnfAE family. As to quaternary structure, composed of six subunits; NqrA, NqrB, NqrC, NqrD, NqrE and NqrF.

The protein localises to the cell inner membrane. It catalyses the reaction a ubiquinone + n Na(+)(in) + NADH + H(+) = a ubiquinol + n Na(+)(out) + NAD(+). Its function is as follows. NQR complex catalyzes the reduction of ubiquinone-1 to ubiquinol by two successive reactions, coupled with the transport of Na(+) ions from the cytoplasm to the periplasm. NqrA to NqrE are probably involved in the second step, the conversion of ubisemiquinone to ubiquinol. This chain is Na(+)-translocating NADH-quinone reductase subunit E, found in Histophilus somni (strain 129Pt) (Haemophilus somnus).